A 383-amino-acid polypeptide reads, in one-letter code: Protein delta homolog 2 (383 aa).

The signal sequence occupies residues 1–26; it reads MPSGCRCLHLVCLLCILAAPVKPVRA. EGF-like domains follow at residues 27–58, 62–89, 91–129, and 131–172; these read DDCSSHCDLAHGCCAPDGSCRCDPGWEGLHCE, RMPGCQHGTCHQPWQCICHSGWAGKFCD, DEHVCTTQSPCRNGGQCIYDGGGEYHCVCPPGFHGRDCE, and KEGP…AHCE. Residues 27-306 are Extracellular-facing; the sequence is DDCSSHCDLA…RQEAGLGKSS (280 aa). 17 disulfides stabilise this stretch: cysteine 29–cysteine 40, cysteine 33–cysteine 46, cysteine 48–cysteine 57, cysteine 66–cysteine 71, cysteine 79–cysteine 88, cysteine 95–cysteine 107, cysteine 101–cysteine 117, cysteine 119–cysteine 128, cysteine 135–cysteine 148, cysteine 142–cysteine 160, cysteine 162–cysteine 171, cysteine 178–cysteine 189, cysteine 183–cysteine 198, cysteine 200–cysteine 209, cysteine 216–cysteine 227, cysteine 221–cysteine 236, and cysteine 238–cysteine 247. N-linked (GlcNAc...) asparagine glycosylation occurs at asparagine 157. An EGF-like 5; calcium-binding domain is found at 174-210; it reads NVDDCLMRPCANGATCLDGINRFSCLCPEGFAGRFCT. Residues 212–248 enclose the EGF-like 6; calcium-binding domain; it reads NLDDCASRPCQRGARCRDRVHDFDCLCPSGYGGKTCE. The helical transmembrane segment at 307–327 threads the bilayer; that stretch reads LVAVVVFGAVTATLVLSTVLL. The Cytoplasmic segment spans residues 328–383; it reads TLRAWRRGVCPPGPCCYPAPHYAPARQDQECQVSMLPAGLPLPPDLPPEPGKTTAL.

The protein resides in the membrane. Regulates adipogenesis. The protein is Protein delta homolog 2 (DLK2) of Sus scrofa (Pig).